A 319-amino-acid polypeptide reads, in one-letter code: Biotin synthase (319 aa).

The Radical SAM core domain occupies 44–273 (IHGDGIDLCS…EAKIRLAGGR (230 aa)). [4Fe-4S] cluster-binding residues include Cys-62, Cys-66, and Cys-69. The [2Fe-2S] cluster site is built by Ser-106, Cys-138, Cys-198, and Arg-268.

Belongs to the radical SAM superfamily. Biotin synthase family. In terms of assembly, homodimer. Requires [4Fe-4S] cluster as cofactor. It depends on [2Fe-2S] cluster as a cofactor.

It catalyses the reaction (4R,5S)-dethiobiotin + (sulfur carrier)-SH + 2 reduced [2Fe-2S]-[ferredoxin] + 2 S-adenosyl-L-methionine = (sulfur carrier)-H + biotin + 2 5'-deoxyadenosine + 2 L-methionine + 2 oxidized [2Fe-2S]-[ferredoxin]. It participates in cofactor biosynthesis; biotin biosynthesis; biotin from 7,8-diaminononanoate: step 2/2. Its function is as follows. Catalyzes the conversion of dethiobiotin (DTB) to biotin by the insertion of a sulfur atom into dethiobiotin via a radical-based mechanism. In Clostridium perfringens (strain ATCC 13124 / DSM 756 / JCM 1290 / NCIMB 6125 / NCTC 8237 / Type A), this protein is Biotin synthase.